The primary structure comprises 602 residues: Arginine--tRNA ligase (602 aa).

Residues 132-142 carry the 'HIGH' region motif; sequence ANPTGPLHVGH.

Belongs to the class-I aminoacyl-tRNA synthetase family. As to quaternary structure, monomer.

The protein localises to the cytoplasm. The catalysed reaction is tRNA(Arg) + L-arginine + ATP = L-arginyl-tRNA(Arg) + AMP + diphosphate. This chain is Arginine--tRNA ligase, found in Cupriavidus metallidurans (strain ATCC 43123 / DSM 2839 / NBRC 102507 / CH34) (Ralstonia metallidurans).